The following is a 536-amino-acid chain: Putative beta-xylosidase (536 aa).

Residue Asp14 is the Proton acceptor of the active site. The active-site Proton donor is Glu186.

Belongs to the glycosyl hydrolase 43 family.

The catalysed reaction is Hydrolysis of (1-&gt;4)-beta-D-xylans, to remove successive D-xylose residues from the non-reducing termini.. This Escherichia coli (strain K12) protein is Putative beta-xylosidase (yagH).